The following is a 1430-amino-acid chain: FYVE, RhoGEF and PH domain-containing protein 6 (1430 aa).

Positions Met1 to Ile36 are disordered. Residues Lys15 to Lys24 show a composition bias toward low complexity. A Phosphoserine modification is found at Ser231. The segment at Cys330–Leu351 is disordered. Polar residues predominate over residues Pro334–Leu351. A Phosphoserine modification is found at Ser515. The segment at Glu516 to Arg538 is disordered. Residues Ser527 to Arg538 are compositionally biased toward basic and acidic residues. Residues Ser554, Ser605, Ser692, and Ser721 each carry the phosphoserine modification. Disordered stretches follow at residues Asn695 to Ser739 and Pro800 to Lys869. Residues Ser728–Ser739 show a composition bias toward polar residues. A compositionally biased stretch (acidic residues) spans Pro831–Ser847. Residues Ser851–Met868 show a composition bias toward basic and acidic residues. In terms of domain architecture, DH spans Lys871–Thr1060. The PH 1 domain maps to Val1089–Glu1183. At Ser1197 the chain carries Phosphoserine. The segment at Asp1222–Gln1281 adopts an FYVE-type zinc-finger fold. Zn(2+) is bound by residues Cys1228, Cys1231, Cys1244, Cys1247, Cys1252, Cys1255, Cys1273, and Cys1276. The region spanning Asp1333 to Ile1429 is the PH 2 domain.

Its subcellular location is the cytoplasm. It is found in the cytoskeleton. In terms of biological role, may activate CDC42, a member of the Ras-like family of Rho- and Rac proteins, by exchanging bound GDP for free GTP. May play a role in regulating the actin cytoskeleton and cell shape. This is FYVE, RhoGEF and PH domain-containing protein 6 (FGD6) from Homo sapiens (Human).